We begin with the raw amino-acid sequence, 276 residues long: Urease accessory protein UreD (276 aa).

This sequence belongs to the UreD family. As to quaternary structure, ureD, UreF and UreG form a complex that acts as a GTP-hydrolysis-dependent molecular chaperone, activating the urease apoprotein by helping to assemble the nickel containing metallocenter of UreC. The UreE protein probably delivers the nickel.

It localises to the cytoplasm. Required for maturation of urease via the functional incorporation of the urease nickel metallocenter. This is Urease accessory protein UreD from Paracidovorax citrulli (strain AAC00-1) (Acidovorax citrulli).